A 266-amino-acid polypeptide reads, in one-letter code: MNKSRFISCVILIFALILVLFTPNVLAESQPDPTPDELHKASKFTGLMENMKVLYDDHYVSATKVKSVDKFLAHDLIYNISDKKLKNYDKVKTELLNEGLAKKYKDEVVDVYGSNYYVNCYFSSKDNVGKVTGGKTCMYGGITKHEGNHFDNGNLQNVLIRVYENKRNTISFEVQTDKKSVTAQELDIKARNFLINKKNLYEFNSSPYETGYIKFIENNGNTFWYDMMPAPGDKFDQSKYLMMYNDNKTVDSKSVKIEVHLTTKNG.

Positions 1–27 (MNKSRFISCVILIFALILVLFTPNVLA) are cleaved as a signal peptide. A disulfide bridge connects residues cysteine 120 and cysteine 137.

It belongs to the staphylococcal/streptococcal toxin family. In terms of assembly, interacts with host MHC class II molecules composed of alpha/HLA-DRA and beta/HLA-DRB1 chains.

The protein localises to the secreted. Staphylococcal enterotoxin that activates the host immune system by binding as unprocessed molecules to major histocompatibility (MHC) complex class II and T-cell receptor (TCR) molecules. In turn, this ternary complex activates a large number of T-lymphocytes initiating a systemic release of pro-inflammatory cytokines. Inhibits SEC1-mediated T-cell activation in the absence of MHC class II by competing with SEC1 for binding to the host TCR. Also causes the intoxication staphylococcal food poisoning syndrome. The sequence is that of Enterotoxin type C-1 (entC1) from Staphylococcus aureus.